Consider the following 173-residue polypeptide: Photosystem I assembly protein Ycf3 (173 aa).

TPR repeat units lie at residues 35-68, 72-105, and 120-153; these read AFAY…EEDP, SYTF…NPKM, and GEQA…APDN.

This sequence belongs to the Ycf3 family.

It localises to the plastid. The protein localises to the cyanelle thylakoid membrane. Functionally, essential for the assembly of the photosystem I (PSI) complex. May act as a chaperone-like factor to guide the assembly of the PSI subunits. This is Photosystem I assembly protein Ycf3 from Cyanophora paradoxa.